Here is a 262-residue protein sequence, read N- to C-terminus: tRNA pseudouridine synthase A (262 aa).

Residue Asp-52 is the Nucleophile of the active site. Residue Tyr-103 coordinates substrate.

It belongs to the tRNA pseudouridine synthase TruA family.

It catalyses the reaction uridine(38/39/40) in tRNA = pseudouridine(38/39/40) in tRNA. Formation of pseudouridine at positions 38, 39 and 40 in the anticodon stem and loop of transfer RNAs. The polypeptide is tRNA pseudouridine synthase A (Methanococcus maripaludis (strain DSM 14266 / JCM 13030 / NBRC 101832 / S2 / LL)).